The primary structure comprises 137 residues: uncharacterized protein (137 aa).

The helical transmembrane segment at 116-136 (YLSIANLATLLLFGIIGLSII) threads the bilayer.

The protein localises to the host membrane. This is an uncharacterized protein from His1 virus (isolate Australia/Victoria) (His1V).